We begin with the raw amino-acid sequence, 500 residues long: Cytochrome P450 71B36 (500 aa).

A helical transmembrane segment spans residues 1-21; the sequence is MATILFLSLLFLSCILLAAFT. Cys-440 contributes to the heme binding site.

Belongs to the cytochrome P450 family. Heme is required as a cofactor.

Its subcellular location is the membrane. The polypeptide is Cytochrome P450 71B36 (CYP71B36) (Arabidopsis thaliana (Mouse-ear cress)).